The sequence spans 182 residues: MACSMISSATVAAVSRASPAQSSMVAPFTCLKSTSAFPVTQKTNNDITSIASNGGRVQCMQVWPPLGLKKFETLSYLPPLSSEQLAKEVDYLLRKNLIPCLEFELEHGFVYREHNRSPGYYDGRYWTMWKLPMFGCNDSSQVLKELEECKKAYPSAFIRIIGFDNKRQVQIISFIAYKPPGV.

A chloroplast-targeting transit peptide spans 1–58 (MACSMISSATVAAVSRASPAQSSMVAPFTCLKSTSAFPVTQKTNNDITSIASNGGRVQ).

This sequence belongs to the RuBisCO small chain family. As to quaternary structure, heterohexadecamer of 8 large and 8 small subunits.

Its subcellular location is the plastid. It is found in the chloroplast. RuBisCO catalyzes two reactions: the carboxylation of D-ribulose 1,5-bisphosphate, the primary event in carbon dioxide fixation, as well as the oxidative fragmentation of the pentose substrate. Both reactions occur simultaneously and in competition at the same active site. Although the small subunit is not catalytic it is essential for maximal activity. In Betula pendula (European white birch), this protein is Ribulose bisphosphate carboxylase small subunit, chloroplastic.